We begin with the raw amino-acid sequence, 557 residues long: MPGKFQTGLRVLATCLFALLVLGGILVAYVTGYQFIHTDRHHLSFGLYGAILGLHLLSQSLFAFLEHRKMRGGGRCPSGKSTVVLCIAAYQEDPEYLRKCLRSVRRLSYPHLRVIMVVDGNTEEDRYMMDIFREVMGSEGTCCYIWDKNYHESEEGGQEGERGVQEMVKNFQYVCIMQKWGGKREVTYTAFRALGDSVAYVQVCDSDTVLDPACTAEMLRILEEDPEVGGVGGDVQILNKYESWISFLSSFRYWMAFNVERACQSYFGCVQCISGPLGMYRNSLLQYFLEDWYHQTFLGQKCSFGDDRHLTNRVLSMGFRTKYTARSRCLTETPTRYLRWLNQQTRWSKSYFREWLYNALWFHKHHLWMTYESVVTGFFPFFLVATVVQLFYRGRVWNILLFLLTVQLVGILKATYACILRGNAEMIFMSLYSLLYMTSLLPAKIFAVITIKKSGWGTSGRRKLVVNFMGMVPVSVWFCILLGGLVYTAYCQSHDPFTETELLFLLTGAILYGCYWVALLSLYLALIARRCGKRQELYNLALEEVSEPEPAAKAIKP.

Residues 1 to 10 (MPGKFQTGLR) lie on the Cytoplasmic side of the membrane. The helical transmembrane segment at 11–31 (VLATCLFALLVLGGILVAYVT) threads the bilayer. Topologically, residues 32-44 (GYQFIHTDRHHLS) are extracellular. A helical membrane pass occupies residues 45 to 65 (FGLYGAILGLHLLSQSLFAFL). Residues 66 to 367 (EHRKMRGGGR…NALWFHKHHL (302 aa)) lie on the Cytoplasmic side of the membrane. A helical membrane pass occupies residues 368–388 (WMTYESVVTGFFPFFLVATVV). The Extracellular segment spans residues 389 to 398 (QLFYRGRVWN). Residues 399 to 419 (ILLFLLTVQLVGILKATYACI) traverse the membrane as a helical segment. Topologically, residues 420-430 (LRGNAEMIFMS) are cytoplasmic. A helical membrane pass occupies residues 431 to 451 (LYSLLYMTSLLPAKIFAVITI). The Extracellular segment spans residues 452–463 (KKSGWGTSGRRK). A helical membrane pass occupies residues 464-484 (LVVNFMGMVPVSVWFCILLGG). Residues 485 to 501 (LVYTAYCQSHDPFTETE) lie on the Cytoplasmic side of the membrane. A helical membrane pass occupies residues 502 to 522 (LLFLLTGAILYGCYWVALLSL). Residues 523–557 (YLALIARRCGKRQELYNLALEEVSEPEPAAKAIKP) lie on the Extracellular side of the membrane.

Belongs to the NodC/HAS family. Mg(2+) serves as cofactor. Post-translationally, O-GlcNAcylation increases the hyaluronan synthase activity, HAS3 stability and its plasma membrane residence. The concentration of UDP-GlcNAc controls the level of O-GlcNAc modification.

The protein resides in the cell membrane. The protein localises to the golgi apparatus membrane. Its subcellular location is the golgi apparatus. It localises to the trans-Golgi network membrane. It is found in the cytoplasmic vesicle. The catalysed reaction is [hyaluronan](n) + UDP-N-acetyl-alpha-D-glucosamine = N-acetyl-beta-D-glucosaminyl-(1-&gt;4)-[hyaluronan](n) + UDP + H(+). The enzyme catalyses N-acetyl-beta-D-glucosaminyl-(1-&gt;4)-[hyaluronan](n) + UDP-alpha-D-glucuronate = [hyaluronan](n+1) + UDP + H(+). It participates in glycan biosynthesis; hyaluronan biosynthesis. In terms of biological role, catalyzes the addition of GlcNAc or GlcUA monosaccharides to the nascent hyaluronan polymer. Therefore, it is essential to hyaluronan synthesis a major component of most extracellular matrices that has a structural role in tissues architectures and regulates cell adhesion, migration and differentiation. This is one of three isoenzymes responsible for cellular hyaluronan synthesis. This chain is Hyaluronan synthase 3 (has3), found in Xenopus laevis (African clawed frog).